Reading from the N-terminus, the 340-residue chain is S-adenosylmethionine:tRNA ribosyltransferase-isomerase (340 aa).

Belongs to the QueA family. In terms of assembly, monomer.

Its subcellular location is the cytoplasm. The catalysed reaction is 7-aminomethyl-7-carbaguanosine(34) in tRNA + S-adenosyl-L-methionine = epoxyqueuosine(34) in tRNA + adenine + L-methionine + 2 H(+). It functions in the pathway tRNA modification; tRNA-queuosine biosynthesis. Transfers and isomerizes the ribose moiety from AdoMet to the 7-aminomethyl group of 7-deazaguanine (preQ1-tRNA) to give epoxyqueuosine (oQ-tRNA). This Chlorobaculum parvum (strain DSM 263 / NCIMB 8327) (Chlorobium vibrioforme subsp. thiosulfatophilum) protein is S-adenosylmethionine:tRNA ribosyltransferase-isomerase.